Here is a 468-residue protein sequence, read N- to C-terminus: 3-isopropylmalate dehydratase large subunit (468 aa).

[4Fe-4S] cluster is bound by residues Cys-347, Cys-407, and Cys-410.

The protein belongs to the aconitase/IPM isomerase family. LeuC type 1 subfamily. As to quaternary structure, heterodimer of LeuC and LeuD. [4Fe-4S] cluster is required as a cofactor.

The catalysed reaction is (2R,3S)-3-isopropylmalate = (2S)-2-isopropylmalate. Its pathway is amino-acid biosynthesis; L-leucine biosynthesis; L-leucine from 3-methyl-2-oxobutanoate: step 2/4. Its function is as follows. Catalyzes the isomerization between 2-isopropylmalate and 3-isopropylmalate, via the formation of 2-isopropylmaleate. This is 3-isopropylmalate dehydratase large subunit from Rippkaea orientalis (strain PCC 8801 / RF-1) (Cyanothece sp. (strain PCC 8801)).